The primary structure comprises 27 residues: thr operon leader peptide (27 aa).

Belongs to the thr operon leader peptide family.

In terms of biological role, this protein is involved in control of the biosynthesis of threonine. The sequence is that of thr operon leader peptide from Escherichia coli O157:H7.